The chain runs to 334 residues: MSIEQLAETAQAMVAPGKGIIAIDESTSTIAKRFASVGIENIEENRRAYRELLLTTPKLSDYISGAILFDETIRQKTKDGVPFAEYMTAHGIIPGIKVDKGAQPLAGMPGELVTEGLDGLRARLEEYYTLGARFAKWRAVINIGEDIPSGTCIEANSHALARYAALCQEQGLVPMVEPEVIMDGSHDIETCYEVTEATLRSLFGALYEQNVVLEGTILKASMVISGKSCEEQASIEEVAESTVMCLKSTVPAILPGIVFLSGGQTDEQSTAHLNEMHQLGNLPWPLSFSYGRAMQQAALKLWAKDMTGNFAKAQQVIYERAKENGLAALGKWKG.

Belongs to the class I fructose-bisphosphate aldolase family.

It carries out the reaction beta-D-fructose 1,6-bisphosphate = D-glyceraldehyde 3-phosphate + dihydroxyacetone phosphate. The protein operates within carbohydrate degradation; glycolysis; D-glyceraldehyde 3-phosphate and glycerone phosphate from D-glucose: step 4/4. The chain is Probable fructose-bisphosphate aldolase class 1 from Xanthomonas axonopodis pv. citri (strain 306).